The following is a 205-amino-acid chain: Guanylyl cyclase-activating protein 1 (205 aa).

Residue Gly-2 is the site of N-myristoyl glycine attachment. Residue Asn-3 is modified to Deamidated asparagine. 4 EF-hand domains span residues 30–48 (SGQLTQHEFKQFFGLKNLS), 50–85 (ASNQYIEQMFDTFDFNKDGYMDFMEYVAALSLVLKG), 86–121 (KVEQKLRWYFKLYDVDGNGCIDRGELLNIIKAIRAI), and 129–164 (TAEEFTDMVFDKIDINGDGELSLEEFIEGVQKDELL). 15 residues coordinate Ca(2+): Asp-63, Asn-65, Asp-67, Tyr-69, Glu-74, Asp-99, Asp-101, Asn-103, Cys-105, Glu-110, Asp-142, Asn-144, Asp-146, Glu-148, and Glu-153.

In terms of tissue distribution, retina.

Functionally, regulatory protein that inhibits guanylyl cyclase when free calcium ions concentration is elevated. This Ca(2+)-sensitive regulation of retinal guanylyl cyclase is a key event in recovery of the dark state of rod photoreceptors following light exposure. In Lithobates pipiens (Northern leopard frog), this protein is Guanylyl cyclase-activating protein 1 (GUCA1A).